We begin with the raw amino-acid sequence, 2092 residues long: Nonribosomal peptide synthetase echPS (2092 aa).

The segment at 13 to 406 is adenylation 1; that stretch reads FSQRCCQNPD…GRRDRVTKIR (394 aa). The 77-residue stretch at 524-600 folds into the Carrier 1 domain; sequence SGPLTIGQAI…SLIEKSRHET (77 aa). Residue Ser-561 is modified to O-(pantetheine 4'-phosphoryl)serine. The disordered stretch occupies residues 596 to 626; it reads SRHETEDTPDSSAFATRTPEESSMPTQGPVT. Positions 605–624 are enriched in polar residues; it reads DSSAFATRTPEESSMPTQGP. Residues 624 to 1017 are condensation 1; sequence PVTPLQKRMV…YTSLLDAFLD (394 aa). Residues 1068–1446 are adenylation 2; the sequence is ASLYPTHVAV…GRKDRQVKVR (379 aa). Positions 1544 to 1622 constitute a Carrier 2 domain; that stretch reads IKTTHLEKLI…DLVILVAQQQ (79 aa). Residue Ser-1582 is modified to O-(pantetheine 4'-phosphoryl)serine. Positions 1663-2047 are condensation 2; it reads SQSQSTFNVS…EALLLECFRI (385 aa).

This sequence belongs to the NRP synthetase family. The cofactor is pantetheine 4'-phosphate.

The catalysed reaction is L-tryptophan + L-alanine + 2 ATP = cyclo(L-tryptophyl-L-alanyl) + 2 ADP + 2 phosphate + 2 H(+). Its pathway is secondary metabolite biosynthesis. The protein operates within alkaloid biosynthesis. Nonribosomal peptide synthetase; part of the gene cluster that mediates the biosynthesis of echinulin family alkaloid. The pathway begins with the biosynthesis of the cyclic dipeptide cyclo-L-Trp-L-Ala (cyclo-TA) by the NRPS echPS via condensation of L-alanine and L-tryptophan. The prenyltransferase echPT1 then catalyzes the first prenylation step, a reverse prenylation reaction at C2, to yield preechinulin. Preechinulin is the substrate of the cytochrome P450 monooxygenase echP450 that catalyzes the formation of the double bond between C10 and C11 to produce neoechulin A. The unique prenyltransferase echPT2 functions as a competitive enzyme with echP450 for preechinulin metabolization and uses preechinulin for effective regiospecific prenylations. Preechinulin is prenylated by echPT2 at C5 or C7. C7-prenylation leads to accumulation of tardioxopiperazine B without further modification by echPT2. In contrast, the C5-prenylated tardioxopiperazine A can be prenylated again by echPT2, predominantly at C7 to form echinulin or less frequently at C4 to give variecolorin L. EchPT2 also accepts neoechilunin A to produce varlecolorin G (prenylation at C5) or isoechinulin A (prenylation at C7). EchPT2 further converts isoechinulin A into dehydroechinulin. Moreover, a yet unidentified enzyme can also convert neoechilunin A into neoechilunin B by introducing a double bond between positions C14 and C17 and thus provides a further substrate to echPT2 for C5 and C7 prenylation. The sequence is that of Nonribosomal peptide synthetase echPS from Aspergillus ruber (strain CBS 135680).